A 329-amino-acid polypeptide reads, in one-letter code: 4-hydroxythreonine-4-phosphate dehydrogenase (329 aa).

Substrate contacts are provided by histidine 136 and threonine 137. A divalent metal cation-binding residues include histidine 166, histidine 211, and histidine 266. Lysine 274, asparagine 283, and arginine 292 together coordinate substrate.

The protein belongs to the PdxA family. Homodimer. Zn(2+) is required as a cofactor. Mg(2+) serves as cofactor. The cofactor is Co(2+).

It is found in the cytoplasm. The catalysed reaction is 4-(phosphooxy)-L-threonine + NAD(+) = 3-amino-2-oxopropyl phosphate + CO2 + NADH. The protein operates within cofactor biosynthesis; pyridoxine 5'-phosphate biosynthesis; pyridoxine 5'-phosphate from D-erythrose 4-phosphate: step 4/5. Its function is as follows. Catalyzes the NAD(P)-dependent oxidation of 4-(phosphooxy)-L-threonine (HTP) into 2-amino-3-oxo-4-(phosphooxy)butyric acid which spontaneously decarboxylates to form 3-amino-2-oxopropyl phosphate (AHAP). In Escherichia coli (strain 55989 / EAEC), this protein is 4-hydroxythreonine-4-phosphate dehydrogenase.